Reading from the N-terminus, the 258-residue chain is Phosphate import ATP-binding protein PstB (258 aa).

An ABC transporter domain is found at Ile5–Gln247. Gly37–Ser44 is an ATP binding site.

Belongs to the ABC transporter superfamily. Phosphate importer (TC 3.A.1.7) family. As to quaternary structure, the complex is composed of two ATP-binding proteins (PstB), two transmembrane proteins (PstC and PstA) and a solute-binding protein (PstS).

The protein resides in the cell membrane. It carries out the reaction phosphate(out) + ATP + H2O = ADP + 2 phosphate(in) + H(+). Functionally, part of the ABC transporter complex PstSACB involved in phosphate import. Responsible for energy coupling to the transport system. This chain is Phosphate import ATP-binding protein PstB, found in Streptomyces griseus.